A 474-amino-acid polypeptide reads, in one-letter code: ATP synthase subunit beta 1 (474 aa).

157–164 (GGAGVGKT) lines the ATP pocket.

It belongs to the ATPase alpha/beta chains family. In terms of assembly, F-type ATPases have 2 components, CF(1) - the catalytic core - and CF(0) - the membrane proton channel. CF(1) has five subunits: alpha(3), beta(3), gamma(1), delta(1), epsilon(1). CF(0) has three main subunits: a(1), b(2) and c(9-12). The alpha and beta chains form an alternating ring which encloses part of the gamma chain. CF(1) is attached to CF(0) by a central stalk formed by the gamma and epsilon chains, while a peripheral stalk is formed by the delta and b chains.

The protein resides in the cell inner membrane. It carries out the reaction ATP + H2O + 4 H(+)(in) = ADP + phosphate + 5 H(+)(out). In terms of biological role, produces ATP from ADP in the presence of a proton gradient across the membrane. The catalytic sites are hosted primarily by the beta subunits. The protein is ATP synthase subunit beta 1 of Polaromonas naphthalenivorans (strain CJ2).